A 231-amino-acid polypeptide reads, in one-letter code: 7-cyano-7-deazaguanine synthase (231 aa).

8–18 serves as a coordination point for ATP; the sequence is FSGGQDSTTCL. The Zn(2+) site is built by cysteine 188, cysteine 197, cysteine 200, and cysteine 203.

It belongs to the QueC family. It depends on Zn(2+) as a cofactor.

It catalyses the reaction 7-carboxy-7-deazaguanine + NH4(+) + ATP = 7-cyano-7-deazaguanine + ADP + phosphate + H2O + H(+). It functions in the pathway purine metabolism; 7-cyano-7-deazaguanine biosynthesis. In terms of biological role, catalyzes the ATP-dependent conversion of 7-carboxy-7-deazaguanine (CDG) to 7-cyano-7-deazaguanine (preQ(0)). The polypeptide is 7-cyano-7-deazaguanine synthase (Escherichia coli O1:K1 / APEC).